Here is a 500-residue protein sequence, read N- to C-terminus: Anthranilate synthase component 1 (500 aa).

Residues Ser-49 and 276–278 (PFM) each bind L-tryptophan. 311–312 (GT) is a binding site for chorismate. Glu-338 contributes to the Mg(2+) binding site. Chorismate is bound by residues Tyr-426, Arg-446, 460–462 (GGG), and Gly-462. Mg(2+) is bound at residue Glu-475.

Belongs to the anthranilate synthase component I family. As to quaternary structure, heterotetramer consisting of two non-identical subunits: a beta subunit (TrpG) and a large alpha subunit (TrpE). Mg(2+) is required as a cofactor.

The enzyme catalyses chorismate + L-glutamine = anthranilate + pyruvate + L-glutamate + H(+). It functions in the pathway amino-acid biosynthesis; L-tryptophan biosynthesis; L-tryptophan from chorismate: step 1/5. Its activity is regulated as follows. Feedback inhibited by tryptophan. Part of a heterotetrameric complex that catalyzes the two-step biosynthesis of anthranilate, an intermediate in the biosynthesis of L-tryptophan. In the first step, the glutamine-binding beta subunit (TrpG) of anthranilate synthase (AS) provides the glutamine amidotransferase activity which generates ammonia as a substrate that, along with chorismate, is used in the second step, catalyzed by the large alpha subunit of AS (TrpE) to produce anthranilate. In the absence of TrpG, TrpE can synthesize anthranilate directly from chorismate and high concentrations of ammonia. In Cereibacter sphaeroides (strain ATCC 17023 / DSM 158 / JCM 6121 / CCUG 31486 / LMG 2827 / NBRC 12203 / NCIMB 8253 / ATH 2.4.1.) (Rhodobacter sphaeroides), this protein is Anthranilate synthase component 1 (trpE).